A 570-amino-acid chain; its full sequence is Sulfite reductase [NADPH] hemoprotein beta-component (570 aa).

The [4Fe-4S] cluster site is built by C434, C440, C479, and C483. Residue C483 coordinates siroheme.

It belongs to the nitrite and sulfite reductase 4Fe-4S domain family. In terms of assembly, alpha(8)-beta(8). The alpha component is a flavoprotein, the beta component is a hemoprotein. Siroheme serves as cofactor. Requires [4Fe-4S] cluster as cofactor.

The catalysed reaction is hydrogen sulfide + 3 NADP(+) + 3 H2O = sulfite + 3 NADPH + 4 H(+). It functions in the pathway sulfur metabolism; hydrogen sulfide biosynthesis; hydrogen sulfide from sulfite (NADPH route): step 1/1. Its function is as follows. Component of the sulfite reductase complex that catalyzes the 6-electron reduction of sulfite to sulfide. This is one of several activities required for the biosynthesis of L-cysteine from sulfate. The protein is Sulfite reductase [NADPH] hemoprotein beta-component of Zymomonas mobilis subsp. mobilis (strain ATCC 31821 / ZM4 / CP4).